A 344-amino-acid chain; its full sequence is DnaJ homolog subfamily C member 25 (344 aa).

Residues 5–25 (WVLLVALSVLFLSGRAGALTE) form a helical membrane-spanning segment. Residues 33–108 (VCYDVLGVSR…ETRKDYDYML (76 aa)) form the J domain. A run of 2 helical transmembrane segments spans residues 134-154 (IVIL…WWSS) and 228-248 (ILLF…SWYV).

The protein belongs to the DNAJC25 family.

It localises to the membrane. This is DnaJ homolog subfamily C member 25 (dnajc25) from Xenopus laevis (African clawed frog).